The primary structure comprises 426 residues: Histidine--tRNA ligase (426 aa).

This sequence belongs to the class-II aminoacyl-tRNA synthetase family. Homodimer.

It localises to the cytoplasm. The enzyme catalyses tRNA(His) + L-histidine + ATP = L-histidyl-tRNA(His) + AMP + diphosphate + H(+). This Geobacillus thermodenitrificans (strain NG80-2) protein is Histidine--tRNA ligase.